The chain runs to 497 residues: 4,4'-diapolycopene oxygenase (497 aa).

This sequence belongs to the carotenoid/retinoid oxidoreductase family. Requires FAD as cofactor.

The enzyme catalyses all-trans-4,4'-diapolycopene + 4 AH2 + 4 O2 = all-trans-4,4'-diapolycopene-4,4'-dial + 4 A + 6 H2O. It carries out the reaction all-trans-4,4'-diaponeurosporene + 2 AH2 + 2 O2 = 4,4'-diaponeurosporenal + 2 A + 3 H2O. It participates in carotenoid biosynthesis. Its function is as follows. Involved in the biosynthesis of C30 carotenoids. Catalyzes the oxidation of the terminal methyl side groups of 4,4'-diapolycopene to yield 4,4'-diapolycopen-4,4'-dial via the aldehyde intermediate 4,4'-diapolycopen-al. Also able to catalyze the oxidation of the terminal methyl side group of 4,4'-diaponeurosporene to form 4,4'-diaponeurosporen-4-al. It has moderate to low activity on the C40 substrates neurosporene and lycopene, and has no detectable activity on zeta-carotene or beta-carotene. This Methylomonas sp protein is 4,4'-diapolycopene oxygenase.